The sequence spans 90 residues: MAYFVPSIVFNGLKSNDKEPLGNFDSSMSPSSYDITVWISSLSKKIASVFINVSLSVKVVTLPKPIDLTLPVGNLIFAFTTKKGWVKLSL.

It localises to the mitochondrion. This is an uncharacterized protein from Ascobolus immersus.